A 317-amino-acid polypeptide reads, in one-letter code: Glycine--tRNA ligase alpha subunit (317 aa).

The protein belongs to the class-II aminoacyl-tRNA synthetase family. As to quaternary structure, tetramer of two alpha and two beta subunits.

It localises to the cytoplasm. It carries out the reaction tRNA(Gly) + glycine + ATP = glycyl-tRNA(Gly) + AMP + diphosphate. This is Glycine--tRNA ligase alpha subunit from Cupriavidus metallidurans (strain ATCC 43123 / DSM 2839 / NBRC 102507 / CH34) (Ralstonia metallidurans).